We begin with the raw amino-acid sequence, 285 residues long: Inositol polyphosphate 1-phosphatase (285 aa).

4 residues coordinate Mg(2+): E68, D106, L108, and D109. 7 residues coordinate 1D-myo-inositol 1,4-bisphosphate: D109, G110, T111, S173, G195, S197, and K200. Mg(2+) is bound at residue D223.

It belongs to the inositol monophosphatase superfamily. Monomer. Mg(2+) serves as cofactor.

It is found in the cytoplasm. The enzyme catalyses 1D-myo-inositol 1,4-bisphosphate + H2O = 1D-myo-inositol 4-phosphate + phosphate. The catalysed reaction is adenosine 3',5'-bisphosphate + H2O = AMP + phosphate. With respect to regulation, partially inhibited by Li(2+). Catalyzes the hydrolysis of the 1-position phosphate from inositol 1,4-bisphosphate. Is also able to convert 3'(2')-phosphoadenosine 5'-phosphate (PAP) to AMP but with less efficiency. The protein is Inositol polyphosphate 1-phosphatase of Entamoeba histolytica (strain ATCC 30459 / HM-1:IMSS / ABRM).